The sequence spans 160 residues: Ribosomal RNA large subunit methyltransferase H (160 aa).

The S-adenosyl-L-methionine site is built by leucine 76 and glycine 108.

It belongs to the RNA methyltransferase RlmH family. Homodimer.

The protein resides in the cytoplasm. It catalyses the reaction pseudouridine(1915) in 23S rRNA + S-adenosyl-L-methionine = N(3)-methylpseudouridine(1915) in 23S rRNA + S-adenosyl-L-homocysteine + H(+). In terms of biological role, specifically methylates the pseudouridine at position 1915 (m3Psi1915) in 23S rRNA. The protein is Ribosomal RNA large subunit methyltransferase H of Nitrobacter hamburgensis (strain DSM 10229 / NCIMB 13809 / X14).